We begin with the raw amino-acid sequence, 283 residues long: 5'-nucleotidase SurE (283 aa).

Positions 14, 15, 47, and 105 each coordinate a divalent metal cation.

It belongs to the SurE nucleotidase family. It depends on a divalent metal cation as a cofactor.

It localises to the cytoplasm. It catalyses the reaction a ribonucleoside 5'-phosphate + H2O = a ribonucleoside + phosphate. In terms of biological role, nucleotidase that shows phosphatase activity on nucleoside 5'-monophosphates. The chain is 5'-nucleotidase SurE from Chlamydia trachomatis serovar D (strain ATCC VR-885 / DSM 19411 / UW-3/Cx).